We begin with the raw amino-acid sequence, 216 residues long: Transmembrane protein 186 (216 aa).

Topologically, residues 1–68 (MAFLLRVVPR…IYRFRAIRAI (68 aa)) are mitochondrial matrix. The disordered stretch occupies residues 31-52 (GDSKRWVGSRSPHSREKSPGTE). The helical transmembrane segment at 69 to 91 (GFLSRLKLAQTAVTVVALPPGFY) threads the bilayer. At 92 to 103 (CYSQGLMTLSSL) the chain is on the mitochondrial intermembrane side. The helical transmembrane segment at 104–124 (CLLGGVASFALAMLCWMSHFF) threads the bilayer. At 125-216 (RRLVGILYVN…GTLATLKNSK (92 aa)) the chain is on the mitochondrial matrix side.

Belongs to the TMEM186 family. As to quaternary structure, part of the mitochondrial complex I assembly/MCIA complex that comprises at least the core subunits TMEM126B, NDUFAF1, ECSIT and ACAD9 and complement subunits such as COA1 and TMEM186. Interacts with MT-ND3.

The protein localises to the mitochondrion inner membrane. Functionally, as part of the MCIA complex, required for efficient assembly of the mitochondrial complex I. In Mus musculus (Mouse), this protein is Transmembrane protein 186.